Here is a 204-residue protein sequence, read N- to C-terminus: uncharacterized protein (204 aa).

Residues 1-20 form a disordered region; that stretch reads MQNPLPEVMSPEHDKRTTTP.

This is an uncharacterized protein from Frog virus 3 (isolate Goorha) (FV-3).